Reading from the N-terminus, the 319-residue chain is Probable murein peptide carboxypeptidase (319 aa).

The Nucleophile role is filled by Ser116. Residues Glu214 and His284 each act as charge relay system in the active site.

Belongs to the peptidase S66 family.

The protein resides in the cytoplasm. It functions in the pathway cell wall degradation; peptidoglycan degradation. Its function is as follows. May be involved in the degradation of peptidoglycan by catalyzing the cleavage of the terminal D-alanine residue from cytoplasmic murein peptides. The polypeptide is Probable murein peptide carboxypeptidase (ykfA) (Bacillus subtilis (strain 168)).